We begin with the raw amino-acid sequence, 933 residues long: Progesterone receptor (933 aa).

The segment at 1-164 is AF3; mediates transcriptional activation; sequence MTELKAKGPR…PATQRVLSPL (164 aa). A disordered region spans residues 1–256; the sequence is MTELKAKGPR…AAAGGGAAAV (256 aa). Positions 1-566 are modulating, Pro-Rich; it reads MTELKAKGPR…YSFESLPQKI (566 aa). Ser-20 carries the post-translational modification Phosphoserine. 2 consecutive short sequence motifs (LXXL motif) follow at residues 55–59 and 115–119; these read LDGLL and LDTLL. Ser-130 and Ser-162 each carry phosphoserine. The segment at 165 to 305 is mediates transcriptional transrepression; that stretch reads MSRSGGKAGD…LATTTMDFIH (141 aa). A Nuclear localization signal motif is present at residues 183–187; it reads KVLPR. Residues Ser-190 and Ser-213 each carry the phosphoserine modification. Positions 220–231 are enriched in acidic residues; the sequence is EVEEEDGSESED. The residue at position 294 (Ser-294) is a Phosphoserine; by MAPK1. The segment at 332–380 is disordered; the sequence is GAGAASAFAPPRSSPSASSTPVAVGDFPDCAYPPDADPKDDAYPLYGDF. Residues 335 to 350 show a composition bias toward low complexity; sequence AASAFAPPRSSPSASS. The residue at position 345 (Ser-345) is a Phosphoserine; by MAPK. Lys-388 participates in a covalent cross-link: Glycyl lysine isopeptide (Lys-Gly) (interchain with G-Cter in SUMO); alternate. Lys-388 is covalently cross-linked (Glycyl lysine isopeptide (Lys-Gly) (interchain with G-Cter in ubiquitin); alternate). The residue at position 400 (Ser-400) is a Phosphoserine; by CDK2. Residues 415–454 are disordered; it reads PDFPLGPPPPLPPRAPPSRPGEAAVTAAPASASVSSSSSS. Over residues 418–433 the composition is skewed to pro residues; it reads PLGPPPPLPPRAPPSR. The segment covering 434–454 has biased composition (low complexity); sequence PGEAAVTAAPASASVSSSSSS. An AF1; mediates transcriptional activation region spans residues 456–546; the sequence is STLECILYKA…VYPPYLNYLR (91 aa). Residue Lys-531 forms a Glycyl lysine isopeptide (Lys-Gly) (interchain with G-Cter in SUMO) linkage. NR C4-type zinc fingers lie at residues 567 to 587 and 603 to 627; these read CLICGDEASGCHYGVLTCGSC and CAGRNDCIVDKIRRKNCPACRLRKC. Positions 567-639 form a DNA-binding region, nuclear receptor; sequence CLICGDEASG…AGMVLGGRKF (73 aa). The residue at position 676 (Ser-676) is a Phosphoserine. One can recognise an NR LBD domain in the interval 679 to 913; sequence QDIQFFPPLI…EFPEMMSEVI (235 aa). An AF2; mediates transcriptional activation region spans residues 687-933; the sequence is LINLLVSIEP…MVKPLLFHKK (247 aa). A progesterone-binding site is contributed by Arg-766.

Belongs to the nuclear hormone receptor family. As to quaternary structure, interacts with SMARD1 and UNC45A. Interacts with CUEDC2; the interaction promotes ubiquitination, decreases sumoylation, and represses transcriptional activity. Interacts with PIAS3; the interaction promotes sumoylation of PR in a hormone-dependent manner, inhibits DNA-binding, and alters nuclear export. Interacts with SP1; the interaction requires ligand-induced phosphorylation on Ser-345 by ERK1/2-MAPK. Interacts with PRMT2. Interacts with NCOA2 and NCOA1. Interacts with KLF9. Interacts with GTF2B. Post-translationally, phosphorylated on multiple serine sites. Several of these sites are hormone-dependent. Phosphorylation on Ser-294 is highly hormone-dependent and modulates ubiquitination and sumoylation on Lys-388. Phosphorylation on Ser-345 also requires induction by hormone. Basal phosphorylation on Ser-162, Ser-190 and Ser-400 is increased in response to progesterone and can be phosphorylated in vitro by the CDK2-A1 complex. Increased levels of phosphorylation on Ser-400 also in the presence of EGF, heregulin, IGF, PMA and FBS. Phosphorylation at this site by CDK2 is ligand-independent, and increases nuclear translocation and transcriptional activity. Phosphorylation at Ser-162 and Ser-294, but not at Ser-190, is impaired during the G(2)/M phase of the cell cycle. Phosphorylation on Ser-345 by ERK1/2 MAPK is required for interaction with SP1. In terms of processing, sumoylation is hormone-dependent and represses transcriptional activity. Sumoylation on all three sites is enhanced by PIAS3. Desumoylated by SENP1. Sumoylation on Lys-388, the main site of sumoylation, is repressed by ubiquitination on the same site, and modulated by phosphorylation at Ser-294. Ubiquitination is hormone-dependent and represses sumoylation on the same site. Promoted by MAPK-mediated phosphorylation on Ser-294. Ubiquitinated by UBR5, leading to its degradation: UBR5 specifically recognizes and binds ligand-bound PGR when it is not associated with coactivators (NCOAs). In presence of NCOAs, the UBR5-degron is not accessible, preventing its ubiquitination and degradation. Post-translationally, palmitoylated by ZDHHC7 and ZDHHC21. Palmitoylation is required for plasma membrane targeting and for rapid intracellular signaling via ERK and AKT kinases and cAMP generation.

Its subcellular location is the nucleus. The protein resides in the cytoplasm. Functionally, the steroid hormones and their receptors are involved in the regulation of eukaryotic gene expression and affect cellular proliferation and differentiation in target tissues. Transcriptional activator of several progesteron-dependent promoters in a variety of cell types. Involved in activation of SRC-dependent MAPK signaling on hormone stimulation. The polypeptide is Progesterone receptor (PGR) (Chlorocebus aethiops (Green monkey)).